A 262-amino-acid chain; its full sequence is MGSIRGNIEEPISQSLTRQNSLYSLKLHEVQTHLGSSGKPLGSMNLDELLKTVLPPAEEGLVRQGSLTLPRDLSKKTVDEVWRDIQQDKNGNGTSTTTTHKQPTLGEITLEDLLLRAGVVTETVVPQENVVNIASNGQWVEYHHQPQQQQGFMTYPVCEMQDMVMMGGLSDTPQAPGRKRVAGEIVEKTVERRQKRMIKNRESAARSRARKQAYTHELEIKVSRLEEENEKLRRLKEVEKILPSEPPPDPKWKLRRTNSASL.

Phosphoserine occurs at positions 21, 43, and 66. Phosphothreonine is present on Thr-104. One can recognise a bZIP domain in the interval 190 to 253 (VERRQKRMIK…SEPPPDPKWK (64 aa)). The interval 192 to 211 (RRQKRMIKNRESAARSRARK) is basic motif. The interval 218-232 (LEIKVSRLEEENEKL) is leucine-zipper. The span at 239-252 (EKILPSEPPPDPKW) shows a compositional bias: basic and acidic residues. The tract at residues 239–262 (EKILPSEPPPDPKWKLRRTNSASL) is disordered.

The protein belongs to the bZIP family. ABI5 subfamily. In terms of assembly, DNA-binding heterodimer with ABI5/DPBF1, DPBF2 or AREB3/DPBF3. Interacts with the AFP proteins AFP2, AFP3 and AFP4. Predominantly expressed in seeds.

The protein resides in the nucleus. In terms of biological role, binds to the embryo specification element and the ABA-responsive element (ABRE) of the Dc3 gene promoter and to the ABRE of the Em1 gene promoter. Could participate in abscisic acid-regulated gene expression during seed development. This chain is ABSCISIC ACID-INSENSITIVE 5-like protein 3 (DPBF4), found in Arabidopsis thaliana (Mouse-ear cress).